We begin with the raw amino-acid sequence, 494 residues long: Ribosomal lysine N-methyltransferase 4 (494 aa).

The SET domain occupies 25 to 265 (PKIEIKDLCC…KNEQVYNIYG (241 aa)). Tyr-264 contributes to the S-adenosyl-L-methionine binding site.

Belongs to the class V-like SAM-binding methyltransferase superfamily. Histone-lysine methyltransferase family. SETD6 subfamily.

The protein resides in the nucleus. Functionally, S-adenosyl-L-methionine-dependent protein-lysine N-methyltransferase that monomethylates 60S ribosomal protein L42 (RPL42A and RPL42B) at 'Lys-55'. The polypeptide is Ribosomal lysine N-methyltransferase 4 (Saccharomyces cerevisiae (strain ATCC 204508 / S288c) (Baker's yeast)).